Consider the following 100-residue polypeptide: Aspartyl/glutamyl-tRNA(Asn/Gln) amidotransferase subunit C (100 aa).

This sequence belongs to the GatC family. Heterotrimer of A, B and C subunits.

The catalysed reaction is L-glutamyl-tRNA(Gln) + L-glutamine + ATP + H2O = L-glutaminyl-tRNA(Gln) + L-glutamate + ADP + phosphate + H(+). The enzyme catalyses L-aspartyl-tRNA(Asn) + L-glutamine + ATP + H2O = L-asparaginyl-tRNA(Asn) + L-glutamate + ADP + phosphate + 2 H(+). In terms of biological role, allows the formation of correctly charged Asn-tRNA(Asn) or Gln-tRNA(Gln) through the transamidation of misacylated Asp-tRNA(Asn) or Glu-tRNA(Gln) in organisms which lack either or both of asparaginyl-tRNA or glutaminyl-tRNA synthetases. The reaction takes place in the presence of glutamine and ATP through an activated phospho-Asp-tRNA(Asn) or phospho-Glu-tRNA(Gln). The chain is Aspartyl/glutamyl-tRNA(Asn/Gln) amidotransferase subunit C from Streptococcus pyogenes serotype M18 (strain MGAS8232).